The primary structure comprises 396 residues: Growth-regulating factor 1 (396 aa).

Residues 18-53 (PFTASQWQELEHQALIYKYMASGTPIPSDLILPLRR) form the QLQ domain. Short sequence motifs (bipartite nuclear localization signal) lie at residues 86–105 (RKAEDPEPGRCRRTDGKKWR) and 123–130 (RGKNRSRK). Residues 90–134 (DPEPGRCRRTDGKKWRCSKEAYPDSKYCEKHMHRGKNRSRKPVEM) enclose the WRC domain. The interval 117-176 (CEKHMHRGKNRSRKPVEMSLATPPPPSSSATSAASNSSAGVAPTTTTTSSPAPSYSRPAP) is disordered. Over residues 120–129 (HMHRGKNRSR) the composition is skewed to basic residues. Low complexity predominate over residues 144–174 (SSATSAASNSSAGVAPTTTTTSSPAPSYSRP).

Belongs to the GRF family. In terms of tissue distribution, highly expressed in the intercalary meristem of the internode and in the shoot apex. Detected in the leaf primordia and emerging leaves in the uppermost node. Preferentially localized in the epidermis and in the tissues surrounding vascular bundles of the intercalary meristem of the internode and in adventitious roots of the second highest node. Low expression in the coleoptile and in the youngest leaf.

It is found in the nucleus. In terms of biological role, transcription activator that plays a regulatory role in gibberellin-induced stem elongation. The sequence is that of Growth-regulating factor 1 (GRF1) from Oryza sativa subsp. indica (Rice).